The following is a 132-amino-acid chain: Small ribosomal subunit protein uS8 (132 aa).

It belongs to the universal ribosomal protein uS8 family. As to quaternary structure, part of the 30S ribosomal subunit. Contacts proteins S5 and S12.

Functionally, one of the primary rRNA binding proteins, it binds directly to 16S rRNA central domain where it helps coordinate assembly of the platform of the 30S subunit. This chain is Small ribosomal subunit protein uS8, found in Mycoplasmopsis pulmonis (strain UAB CTIP) (Mycoplasma pulmonis).